Consider the following 202-residue polypeptide: Small ribosomal subunit protein uS4c (202 aa).

Positions 90 to 165 constitute an S4 RNA-binding domain; the sequence is MRLDNILFRL…SQKYKIPNHL (76 aa).

Belongs to the universal ribosomal protein uS4 family. In terms of assembly, part of the 30S ribosomal subunit. Contacts protein S5. The interaction surface between S4 and S5 is involved in control of translational fidelity.

Its subcellular location is the plastid. The protein resides in the chloroplast. One of the primary rRNA binding proteins, it binds directly to 16S rRNA where it nucleates assembly of the body of the 30S subunit. In terms of biological role, with S5 and S12 plays an important role in translational accuracy. In Diphyscium foliosum (Nut-moss), this protein is Small ribosomal subunit protein uS4c (rps4).